Consider the following 253-residue polypeptide: 5'-nucleotidase SurE (253 aa).

A divalent metal cation contacts are provided by D8, D9, S39, and N92.

The protein belongs to the SurE nucleotidase family. The cofactor is a divalent metal cation.

The protein localises to the cytoplasm. The enzyme catalyses a ribonucleoside 5'-phosphate + H2O = a ribonucleoside + phosphate. Its function is as follows. Nucleotidase that shows phosphatase activity on nucleoside 5'-monophosphates. This is 5'-nucleotidase SurE from Burkholderia pseudomallei (strain 668).